We begin with the raw amino-acid sequence, 597 residues long: Elongation factor 4 (597 aa).

Residues 2–184 (DHIRNFSIIA…ALIAKVPPPK (183 aa)) form the tr-type G domain. GTP contacts are provided by residues 14 to 19 (DHGKST) and 131 to 134 (NKID).

The protein belongs to the TRAFAC class translation factor GTPase superfamily. Classic translation factor GTPase family. LepA subfamily.

It localises to the cell inner membrane. The catalysed reaction is GTP + H2O = GDP + phosphate + H(+). In terms of biological role, required for accurate and efficient protein synthesis under certain stress conditions. May act as a fidelity factor of the translation reaction, by catalyzing a one-codon backward translocation of tRNAs on improperly translocated ribosomes. Back-translocation proceeds from a post-translocation (POST) complex to a pre-translocation (PRE) complex, thus giving elongation factor G a second chance to translocate the tRNAs correctly. Binds to ribosomes in a GTP-dependent manner. In Paraburkholderia phymatum (strain DSM 17167 / CIP 108236 / LMG 21445 / STM815) (Burkholderia phymatum), this protein is Elongation factor 4.